The chain runs to 161 residues: Protein-export protein SecB (161 aa).

It belongs to the SecB family. In terms of assembly, homotetramer, a dimer of dimers. One homotetramer interacts with 1 SecA dimer.

It localises to the cytoplasm. Its function is as follows. One of the proteins required for the normal export of preproteins out of the cell cytoplasm. It is a molecular chaperone that binds to a subset of precursor proteins, maintaining them in a translocation-competent state. It also specifically binds to its receptor SecA. The sequence is that of Protein-export protein SecB from Shewanella putrefaciens (strain CN-32 / ATCC BAA-453).